We begin with the raw amino-acid sequence, 98 residues long: NADH-ubiquinone oxidoreductase chain 4L (98 aa).

Helical transmembrane passes span 1–21 (MPSTYINILLAFTMALLGLLL), 29–49 (SLLCLEGLMLALFILSTLMAL), and 61–81 (IVLMVFAACEAALGLALLVMV).

The protein belongs to the complex I subunit 4L family. As to quaternary structure, core subunit of respiratory chain NADH dehydrogenase (Complex I) which is composed of 45 different subunits.

It localises to the mitochondrion inner membrane. The enzyme catalyses a ubiquinone + NADH + 5 H(+)(in) = a ubiquinol + NAD(+) + 4 H(+)(out). Core subunit of the mitochondrial membrane respiratory chain NADH dehydrogenase (Complex I) which catalyzes electron transfer from NADH through the respiratory chain, using ubiquinone as an electron acceptor. Part of the enzyme membrane arm which is embedded in the lipid bilayer and involved in proton translocation. This is NADH-ubiquinone oxidoreductase chain 4L (MT-ND4L) from Choloepus didactylus (Southern two-toed sloth).